A 273-amino-acid polypeptide reads, in one-letter code: WIMGHMVNAIGQIDEFVNLGANSIETDVSFDSSANPEYTYHGIPCDCGRNCKKWENFNDFLKGLRSATTPGNSKYKEKLVLVVFDLKTGSLYDNQANDAGKKLAKNLLQHYWNNGNNGGRAYIVLSIPDPNHYPLIKGFTDTLKQEGHPELLDKLGYDFSGNDAIGDVAKAYKKAGVSGHVWQSDGITNCLLRGLTRVKEAVANRDSGNGYINKVYYWTVDKRATTRDALDAGVDGIMTNYPDVITDVLNEAAYKSKFRVATYEDNPWETFKK.

His-5 is an active-site residue. The Mg(2+) site is built by Glu-25 and Asp-27. The active-site Nucleophile is His-41. 2 cysteine pairs are disulfide-bonded: Cys-45–Cys-51 and Cys-47–Cys-190. Asp-85 is a Mg(2+) binding site.

The protein belongs to the arthropod phospholipase D family. Class II subfamily. Mg(2+) is required as a cofactor. In terms of tissue distribution, expressed by the venom gland.

Its subcellular location is the secreted. It catalyses the reaction an N-(acyl)-sphingosylphosphocholine = an N-(acyl)-sphingosyl-1,3-cyclic phosphate + choline. It carries out the reaction an N-(acyl)-sphingosylphosphoethanolamine = an N-(acyl)-sphingosyl-1,3-cyclic phosphate + ethanolamine. The enzyme catalyses a 1-acyl-sn-glycero-3-phosphocholine = a 1-acyl-sn-glycero-2,3-cyclic phosphate + choline. The catalysed reaction is a 1-acyl-sn-glycero-3-phosphoethanolamine = a 1-acyl-sn-glycero-2,3-cyclic phosphate + ethanolamine. Its function is as follows. Dermonecrotic toxins cleave the phosphodiester linkage between the phosphate and headgroup of certain phospholipids (sphingolipid and lysolipid substrates), forming an alcohol (often choline) and a cyclic phosphate. This toxin acts on sphingomyelin (SM). It may also act on ceramide phosphoethanolamine (CPE), lysophosphatidylcholine (LPC) and lysophosphatidylethanolamine (LPE), but not on lysophosphatidylserine (LPS), and lysophosphatidylglycerol (LPG). It acts by transphosphatidylation, releasing exclusively cyclic phosphate products as second products. Induces dermonecrosis, hemolysis, increased vascular permeability, edema, inflammatory response, and platelet aggregation. This is Dermonecrotic toxin LhSicTox-alphaIA1ii from Loxosceles hirsuta (Recluse spider).